The following is a 152-amino-acid chain: ADP-ribose glycohydrolase OARD1 (152 aa).

At alanine 2 the chain carries N-acetylalanine. Residues 2–152 (ASSLNEDPEG…TDIKITVYTL (151 aa)) enclose the Macro domain. Serine 4 bears the Phosphoserine mark. Residue leucine 21 coordinates substrate. The active-site Nucleophile is lysine 84. Substrate contacts are provided by residues 119–125 (RIGCGLD) and leucine 152. Residue aspartate 125 is the Proton acceptor of the active site.

As to expression, ubiquitous.

It is found in the nucleus. The protein resides in the nucleoplasm. Its subcellular location is the nucleolus. It localises to the chromosome. It carries out the reaction 2''-O-acetyl-ADP-D-ribose + H2O = ADP-D-ribose + acetate + H(+). The catalysed reaction is 5-O-(ADP-D-ribosyl)-L-glutamyl-[protein] + H2O = L-glutamyl-[protein] + ADP-D-ribose + H(+). It catalyses the reaction alpha-NAD(+) + H2O = ADP-D-ribose + nicotinamide + H(+). Its activity is regulated as follows. Subject to competitive inhibition by the product ADP-ribose. Its function is as follows. ADP-ribose glycohydrolase that hydrolyzes ADP-ribose and acts on different substrates, such as proteins ADP-ribosylated on glutamate and O-acetyl-ADP-D-ribose. Specifically acts as a glutamate mono-ADP-ribosylhydrolase by mediating the removal of mono-ADP-ribose attached to glutamate residues on proteins. Does not act on poly-ADP-ribosylated proteins: the poly-ADP-ribose chain of poly-ADP-ribosylated glutamate residues must by hydrolyzed into mono-ADP-ribosylated glutamate by PARG to become a substrate for OARD1. Deacetylates O-acetyl-ADP ribose, a signaling molecule generated by the deacetylation of acetylated lysine residues in histones and other proteins. Catalyzes the deacylation of O-acetyl-ADP-ribose, O-propionyl-ADP-ribose and O-butyryl-ADP-ribose, yielding ADP-ribose plus acetate, propionate and butyrate, respectively. This is ADP-ribose glycohydrolase OARD1 from Homo sapiens (Human).